A 125-amino-acid polypeptide reads, in one-letter code: Large ribosomal subunit protein bL19 (125 aa).

It belongs to the bacterial ribosomal protein bL19 family.

Functionally, this protein is located at the 30S-50S ribosomal subunit interface and may play a role in the structure and function of the aminoacyl-tRNA binding site. In Wolbachia pipientis wMel, this protein is Large ribosomal subunit protein bL19.